Consider the following 579-residue polypeptide: PCNA-interacting partner (579 aa).

The segment at 480-543 (TSFGNVHLDR…AKIPKKSNDS (64 aa)) is disordered. Residues 486 to 496 (HLDRSKNEKVS) are compositionally biased toward basic and acidic residues.

This sequence belongs to the PARI family. In terms of assembly, interacts with RAD51 and PCNA. Interacts with PARP1. Interacts with TASOR. In terms of tissue distribution, restricted to testis. Overexpressed in multiple cancer cells.

It is found in the cytoplasm. The protein resides in the nucleus. Functionally, required to suppress inappropriate homologous recombination, thereby playing a central role DNA repair and in the maintenance of genomic stability. Antagonizes homologous recombination by interfering with the formation of the RAD51-DNA homologous recombination structure. Binds single-strand DNA and poly(A) homopolymers. Positively regulate the poly(ADP-ribosyl)ation activity of PARP1; however such function may be indirect. The polypeptide is PCNA-interacting partner (PARPBP) (Homo sapiens (Human)).